The chain runs to 179 residues: Tetratricopeptide repeat protein 36 (179 aa).

TPR repeat units follow at residues Ser43 to Asn76, Pro77 to Lys110, and Cys115 to Phe148.

This sequence belongs to the TTC36 family.

The sequence is that of Tetratricopeptide repeat protein 36 from Caenorhabditis briggsae.